The primary structure comprises 275 residues: Leucine-rich repeat-containing protein 3C (275 aa).

The N-terminal stretch at 1–41 (MRMTSSSFVSYCTPGLCQFMAMLPTAGHLLPLLLVIGTGGT) is a signal peptide. The 38-residue stretch at 42–79 (VPSPQVPPRGCYVAKEAGERTFRCSQAGLSAVPSGIPN) folds into the LRRNT domain. 3 LRR repeats span residues 80–101 (DTRK…AFQH), 104–125 (VLEE…AFQG), and 129–150 (TLRH…AFVG). Asn-156 carries an N-linked (GlcNAc...) asparagine glycan. The LRRCT domain occupies 160–212 (NPWHCDCALQEVLRQVRLVPGTGTGIVCGSGARPDLVGQEFLLLAGEEELCGS). A helical membrane pass occupies residues 225 to 245 (LLVTMGGWLTLMVAYLVHYVW).

The protein belongs to the LRRC3 family.

The protein localises to the membrane. The chain is Leucine-rich repeat-containing protein 3C (LRRC3C) from Homo sapiens (Human).